We begin with the raw amino-acid sequence, 223 residues long: 7-cyano-7-deazaguanine synthase (223 aa).

8 to 18 (MSGGMDSTLCA) lines the ATP pocket. Residues cysteine 187, cysteine 195, cysteine 198, and cysteine 201 each contribute to the Zn(2+) site.

This sequence belongs to the QueC family. Zn(2+) is required as a cofactor.

It carries out the reaction 7-carboxy-7-deazaguanine + NH4(+) + ATP = 7-cyano-7-deazaguanine + ADP + phosphate + H2O + H(+). It participates in purine metabolism; 7-cyano-7-deazaguanine biosynthesis. Functionally, catalyzes the ATP-dependent conversion of 7-carboxy-7-deazaguanine (CDG) to 7-cyano-7-deazaguanine (preQ(0)). The protein is 7-cyano-7-deazaguanine synthase of Campylobacter curvus (strain 525.92).